Reading from the N-terminus, the 208-residue chain is Thioredoxin domain-containing protein 9 (208 aa).

Residues 68–179 (YEEVADEKEF…MENRLARSEV (112 aa)) enclose the Thioredoxin domain.

Expressed throughout the body with high expression in the nervous system, including the ventral nerve cord and tail neurons, and vulva.

Its subcellular location is the nucleus. It localises to the cytoplasm. In terms of biological role, required for normal microtubule organization and function. Regulates tubulin acetylation in ALM and PLM neurons. This Caenorhabditis elegans protein is Thioredoxin domain-containing protein 9.